A 340-amino-acid chain; its full sequence is Cathepsin S (340 aa).

Residues 1-17 (MRAPGHAAIRWLFWMPL) form the signal peptide. A propeptide spans 18–122 (VCSVAMEQLQ…VTFRSYSNRT (105 aa)) (activation peptide). A glycan (N-linked (GlcNAc...) asparagine) is linked at Asn120. Disulfide bonds link Cys134-Cys233, Cys144-Cys189, Cys178-Cys222, and Cys281-Cys329. Residue Cys147 is part of the active site. Catalysis depends on residues His287 and Asn307.

It belongs to the peptidase C1 family. Widely expressed with highest expression found in non-skeletal tissues. Relatively high levels found in skeletal tissues. Expressed in spleen, B cells, dendritic cells and macrophages.

The protein resides in the lysosome. Its subcellular location is the secreted. The protein localises to the cytoplasmic vesicle. It localises to the phagosome. The enzyme catalyses Similar to cathepsin L, but with much less activity on Z-Phe-Arg-|-NHMec, and more activity on the Z-Val-Val-Arg-|-Xaa compound.. In terms of biological role, thiol protease. Key protease responsible for the removal of the invariant chain from MHC class II molecules and MHC class II antigen presentation. The bond-specificity of this proteinase is in part similar to the specificities of cathepsin L. The protein is Cathepsin S (Ctss) of Mus musculus (Mouse).